Reading from the N-terminus, the 294-residue chain is Phosphoribosylaminoimidazole-succinocarboxamide synthase (294 aa).

The protein belongs to the SAICAR synthetase family.

The enzyme catalyses 5-amino-1-(5-phospho-D-ribosyl)imidazole-4-carboxylate + L-aspartate + ATP = (2S)-2-[5-amino-1-(5-phospho-beta-D-ribosyl)imidazole-4-carboxamido]succinate + ADP + phosphate + 2 H(+). Its pathway is purine metabolism; IMP biosynthesis via de novo pathway; 5-amino-1-(5-phospho-D-ribosyl)imidazole-4-carboxamide from 5-amino-1-(5-phospho-D-ribosyl)imidazole-4-carboxylate: step 1/2. The protein is Phosphoribosylaminoimidazole-succinocarboxamide synthase of Thermoplasma acidophilum (strain ATCC 25905 / DSM 1728 / JCM 9062 / NBRC 15155 / AMRC-C165).